The following is a 263-amino-acid chain: Probable 6-oxopurine nucleoside phosphorylase (263 aa).

Residues Thr-9, 49–50 (RH), and 82–83 (TA) each bind phosphate. Met-181 contributes to the substrate binding site. Thr-182 lines the phosphate pocket. 205–207 (NYA) contacts substrate.

Belongs to the PNP/MTAP phosphorylase family. MTAP subfamily. Homohexamer. Dimer of a homotrimer.

The catalysed reaction is a purine D-ribonucleoside + phosphate = a purine nucleobase + alpha-D-ribose 1-phosphate. Its pathway is purine metabolism; purine nucleoside salvage. In terms of biological role, purine nucleoside phosphorylase which is highly specific for 6-oxopurine nucleosides. Cleaves guanosine or inosine to respective bases and sugar-1-phosphate molecules. Involved in purine salvage. In Dictyoglomus turgidum (strain DSM 6724 / Z-1310), this protein is Probable 6-oxopurine nucleoside phosphorylase.